Consider the following 809-residue polypeptide: Glycerol-3-phosphate acyltransferase (809 aa).

The short motif at 306–311 (HRSHMD) is the HXXXXD motif element.

This sequence belongs to the GPAT/DAPAT family.

The protein resides in the cell inner membrane. It carries out the reaction sn-glycerol 3-phosphate + an acyl-CoA = a 1-acyl-sn-glycero-3-phosphate + CoA. The protein operates within phospholipid metabolism; CDP-diacylglycerol biosynthesis; CDP-diacylglycerol from sn-glycerol 3-phosphate: step 1/3. The protein is Glycerol-3-phosphate acyltransferase of Vibrio vulnificus (strain YJ016).